The primary structure comprises 378 residues: Mannitol-1-phosphate 5-dehydrogenase (378 aa).

An NAD(+)-binding site is contributed by Ser4 to Gly15.

This sequence belongs to the mannitol dehydrogenase family.

It catalyses the reaction D-mannitol 1-phosphate + NAD(+) = beta-D-fructose 6-phosphate + NADH + H(+). This Streptococcus pneumoniae (strain CGSP14) protein is Mannitol-1-phosphate 5-dehydrogenase.